A 217-amino-acid polypeptide reads, in one-letter code: Ras-related protein RABA1e (217 aa).

20-27 (GDSGVGKS) contributes to the GTP binding site. An Effector region motif is present at residues 42–50 (SKSTIGVEF). GTP is bound by residues 68–72 (DTAGQ), 126–129 (NKAD), and 156–157 (SA). S-geranylgeranyl cysteine attachment occurs at residues Cys-214 and Cys-215.

Belongs to the small GTPase superfamily. Rab family.

The protein localises to the cell membrane. In terms of biological role, intracellular vesicle trafficking and protein transport. This Arabidopsis thaliana (Mouse-ear cress) protein is Ras-related protein RABA1e (RABA1E).